The chain runs to 373 residues: Glycerol-3-phosphate dehydrogenase [NAD(+)] 2 (373 aa).

At Ser15 the chain carries Phosphoserine. Residues 31-36 (GSGNWG), Phe123, Lys146, and Ala179 contribute to the NAD(+) site. A substrate-binding site is contributed by Lys146. Lys236 (proton acceptor) is an active-site residue. Residues Arg300 and Gln329 each coordinate NAD(+). 300–301 (RN) provides a ligand contact to substrate.

The protein belongs to the NAD-dependent glycerol-3-phosphate dehydrogenase family.

The protein localises to the cytoplasm. The enzyme catalyses sn-glycerol 3-phosphate + NAD(+) = dihydroxyacetone phosphate + NADH + H(+). The sequence is that of Glycerol-3-phosphate dehydrogenase [NAD(+)] 2 (gpd2) from Schizosaccharomyces pombe (strain 972 / ATCC 24843) (Fission yeast).